Reading from the N-terminus, the 314-residue chain is Malate dehydrogenase (314 aa).

NAD(+)-binding positions include 11-16 and D35; that span reads GSGNIG. Positions 84 and 90 each coordinate substrate. NAD(+)-binding positions include N97 and 120-122; that span reads ITN. Residues N122 and R153 each contribute to the substrate site. The active-site Proton acceptor is H177.

This sequence belongs to the LDH/MDH superfamily. MDH type 3 family.

It carries out the reaction (S)-malate + NAD(+) = oxaloacetate + NADH + H(+). Its function is as follows. Catalyzes the reversible oxidation of malate to oxaloacetate. This Rickettsia felis (strain ATCC VR-1525 / URRWXCal2) (Rickettsia azadi) protein is Malate dehydrogenase.